Consider the following 347-residue polypeptide: KRR1 small subunit processome component homolog (347 aa).

The KH domain occupies 124–194; that stretch reads GCDIIKIGNL…VRDIVLETMN (71 aa). Residues 231–246 show a composition bias toward basic residues; sequence NKNLSKRKQPKVKKPK. The disordered stretch occupies residues 231-347; the sequence is NKNLSKRKQP…LLKANKKSKS (117 aa). Residues 271 to 304 are a coiled coil; it reads FLNKEQKQAKRQQERQTKQAEAAKKQDERRNKDF. Basic and acidic residues-rich tracts occupy residues 272 to 303 and 318 to 329; these read LNKE…RNKD and KANDNDSSDSRV. A compositionally biased stretch (basic residues) spans 337–347; it reads KLLKANKKSKS.

The protein belongs to the KRR1 family. In terms of assembly, monomer. Component of the ribosomal small subunit (SSU) processome.

It localises to the nucleus. The protein localises to the nucleolus. In terms of biological role, required for 40S ribosome biogenesis. Involved in nucleolar processing of pre-18S ribosomal RNA and ribosome assembly. Binds to RNA. Required for female germline development, cell viability during eye development and for survival of dividing cells and epithelial cells during early wing disk development. The polypeptide is KRR1 small subunit processome component homolog (Drosophila willistoni (Fruit fly)).